A 542-amino-acid chain; its full sequence is Probable folate-biopterin transporter 8, chloroplastic (542 aa).

The N-terminal 78 residues, 1–78 (MERIMINPLL…GVSEFEETAR (78 aa)), are a transit peptide targeting the chloroplast. A disordered region spans residues 24 to 45 (LSSIHRQQQQQERQSNNNTLFM). A run of 12 helical transmembrane segments spans residues 103-123 (FPWL…PSTL), 132-152 (LPMV…IGSG), 155-175 (VPYI…MGIF), 181-201 (VLPS…ITEV), 223-243 (ALMA…YLLL), 246-266 (PPKI…VVSL), 308-328 (LIWA…VFCY), 338-358 (SVIG…TVVY), 369-389 (PLIH…YILV), 404-424 (VLCF…PFAV), 446-466 (LCLS…LIGI), and 477-497 (GILI…LVPM). The interval 506-542 (GKRGISKRSRRNRRVGRVVDKESVTYRRERESEEAQR) is disordered. Over residues 509-521 (GISKRSRRNRRVG) the composition is skewed to basic residues. A compositionally biased stretch (basic and acidic residues) spans 522-542 (RVVDKESVTYRRERESEEAQR).

It belongs to the major facilitator superfamily. Folate-biopterin transporter (TC 2.A.71) family.

The protein resides in the plastid. Its subcellular location is the chloroplast membrane. Could mediate folate transport. In Arabidopsis thaliana (Mouse-ear cress), this protein is Probable folate-biopterin transporter 8, chloroplastic.